Here is a 179-residue protein sequence, read N- to C-terminus: MQSEMHPELAKLSFLLGRWEGLGVAGYPDTEEFQFTQVIEFTHDGHPHLNYRSQVWRVNEDGSRGEPVTSESGYWRVRTGKAAQQEDPDQPPIHVEVLISHPEGYSEVYLGTVFAHRVELHTDVVVRTETGLPAAASHRLYGLFGDNRETLGYAWDLAANSKELQPYMSAQLQRVDRKS.

The GXWXGXG signature appears at 17–23 (GRWEGLG).

It belongs to the nitrobindin family.

The protein is Ferric nitrobindin-like protein of Thermobifida fusca (strain YX).